Here is a 1236-residue protein sequence, read N- to C-terminus: MSDQASDPYMYDDDSSSITPEDCWTVISSFFQEKGLVSQQLDSFDEFIESTIQELVWEDSRLILDQPAQHTSEEDHENRRYEITFGKIYISKPTQTEGDGTTHPMFPQEARLRNLTYSSPLYVDMTKRVLKSDDNAGNEHELEWIEEEIKDEEPSTKVYLGKVPIMLRSKFCMLRDLGEHEFYELKECPYDMGGYFVINGSEKVLIAQERSAANIVQVFKKAAPSPISHVAEIRSALERGSRLISSMQIKLYGREEKSTSNRTIKATLPYIKEDIPIVIVFRALGIVPDGDILEHICYDANDWQMLEMLKPCVEEGFVIQEREVALDFIGRRGALGIKREKRIQYAKDILQKELLPNITQDEGFETRKAFFLGYMVNRLLLCALERKEPDDRDHFGKKRLDLAGPLLASLFRILFKKLTKDIYNYMQRCVENDKVFNLTLAVKSQTITDGLRYSLATGNWGEQKKAMSSRAGVSQVLNRYTYSSTLSHLRRTNTPIGRDGKIAKPRQLHNTHWGLVCPAETPEGQACGLVKNLSLMSCISVGTPSEPILYFLEEWGMEPLEDYVPSNSPDSTRVFVNGVWVGTHREPAHLVDTMRSLRRRGDISPEVSIIRDIREKEFKIFTDAGRVYRPLFIVDDDPESETKGELKLQKEHIHKLLNAEYSEEYATNEFGEEEGPYGWSSLVNDGVVEYVDAEEEETIMIAMTPEDLEASKSSLTATQQKSLQLEEQELDPAKRIKPTNSSTTSTFTHCEIHPSMILGVAASIIPFPDHNQSPRNTYQSAMGKQAMGVFLTNYSVRMDTMANILYYPQKPLATTRAMEHLKFRELPAGQNAIVAIACYSGYNQEDSMIMNQSSIDRGLFRSLFFRTYMDLEKRQGMKALETFEKPSRSDTLRLKHGTYEKLDDDGLIAPGIRVSGEDIIIGKTTPIPPDTEELGQRTQYHTKRDASTPLRSTESGIVDQVLLTTNGDGAKFVKVRMRTTKVPQIGDKFASRHGQKGTVGVTYRHEDMPFTSQGIVPDLIINPHAIPSRMTVAHLIECLLSKVSSLSGLEGDASPFTDVTAEAVSKLLREHGYQSRGFEVMYHGHTGKKLMAQVFFGPTYYQRLRHMVDDKIHARARGPVQVLTRQPVEGRSRDGGLRFGEMERDCMIAHGAAGFLKERLMEASDAFRVHVCGVCGLMSVIANLKKNQFECRSCKNKTNIYQIHIPYAAKLLFQELMAMNISPRLYTERSGVSVRT.

Position 846 (Asp-846) interacts with Mg(2+). Zn(2+) is bound by residues Cys-1172, Cys-1175, Cys-1191, and Cys-1194. A C4-type zinc finger spans residues 1172 to 1194 (CGVCGLMSVIANLKKNQFECRSC).

The protein belongs to the RNA polymerase beta chain family. As to quaternary structure, component of the RNA polymerase II (Pol II) complex consisting of 12 subunits.

It localises to the nucleus. It carries out the reaction RNA(n) + a ribonucleoside 5'-triphosphate = RNA(n+1) + diphosphate. DNA-dependent RNA polymerase catalyzes the transcription of DNA into RNA using the four ribonucleoside triphosphates as substrates. Second largest component of RNA polymerase II which synthesizes mRNA precursors and many functional non-coding RNAs. Proposed to contribute to the polymerase catalytic activity and forms the polymerase active center together with the largest subunit. Pol II is the central component of the basal RNA polymerase II transcription machinery. It is composed of mobile elements that move relative to each other. RPB2 is part of the core element with the central large cleft, the clamp element that moves to open and close the cleft and the jaws that are thought to grab the incoming DNA template. In Meyerozyma guilliermondii (strain ATCC 6260 / CBS 566 / DSM 6381 / JCM 1539 / NBRC 10279 / NRRL Y-324) (Yeast), this protein is DNA-directed RNA polymerase II subunit RPB2 (RPB2).